Here is a 156-residue protein sequence, read N- to C-terminus: Small ribosomal subunit protein uS7 (156 aa).

This sequence belongs to the universal ribosomal protein uS7 family. Part of the 30S ribosomal subunit. Contacts proteins S9 and S11.

In terms of biological role, one of the primary rRNA binding proteins, it binds directly to 16S rRNA where it nucleates assembly of the head domain of the 30S subunit. Is located at the subunit interface close to the decoding center, probably blocks exit of the E-site tRNA. This is Small ribosomal subunit protein uS7 from Bradyrhizobium sp. (strain BTAi1 / ATCC BAA-1182).